Consider the following 51-residue polypeptide: Large ribosomal subunit protein eL39 (51 aa).

The protein belongs to the eukaryotic ribosomal protein eL39 family.

The protein is Large ribosomal subunit protein eL39 of Hyperthermus butylicus (strain DSM 5456 / JCM 9403 / PLM1-5).